The sequence spans 249 residues: MASASGAMAKHEQILVLDPPSDLKFKGPFTDVVTTNLKLQNPSDRKVCFKVKTTAPRRYCVRPNSGVIDPGSIVTVSVMLQPFDYDPNEKSKHKFMVQTIFAPPNISDMEAVWKEAKPDELMDSKLRCVFEMPNENDKLNDMEPSKAVPLNASKQDGPLPKPHSVSLNDTETRKLMEECKRLQGEMMKLSEENRHLRDEGLRLRKVAHSDKPGSTSAVSFRDNVTSPLPSLLVVIAAIFIGFFLGKFIL.

Position 2 is an N-acetylalanine (A2). Over 2–227 (ASASGAMAKH…VSFRDNVTSP (226 aa)) the chain is Cytoplasmic. The MSP domain occupies 14-131 (ILVLDPPSDL…MDSKLRCVFE (118 aa)). The interval 50 to 53 (KVKT) is phosphorylated FFAT motif binding. K125 bears the N6-acetyllysine mark. A compositionally biased stretch (basic and acidic residues) spans 135–144 (ENDKLNDMEP). Positions 135–166 (ENDKLNDMEPSKAVPLNASKQDGPLPKPHSVS) are disordered. S166 is subject to Phosphoserine. A coiled-coil region spans residues 168 to 207 (NDTETRKLMEECKRLQGEMMKLSEENRHLRDEGLRLRKVA). A Phosphothreonine modification is found at T170. S214, S216, and S219 each carry phosphoserine. A helical; Anchor for type IV membrane protein membrane pass occupies residues 228–248 (LPSLLVVIAAIFIGFFLGKFI).

It belongs to the VAMP-associated protein (VAP) (TC 9.B.17) family. As to quaternary structure, homodimer; disulfide-linked. Heterodimer with VAPB. Interacts with VAMP1, VAMP2, STX1A, BET1, SEC22C and with the C-terminal domain of OCLN. Interacts (via MSP domain) with OSBPL1A (via FFAT motif). Interacts (via MSP domain) with ZFYVE27; may retain ZFYVE27 in the endoplasmic reticulum and regulate its function in cell projections formation. Interacts with OSBP. Interacts (via C-terminus) with RSAD2/viperin (via C-terminus). Interacts with IFITM3. Interacts with OSBPL3 (phosphorylated form). Interacts with KIF5A in a ZFYVE27-dependent manner. Interacts (via MSP domain) with STARD3 (via phosphorylated FFAT motif); this interaction recruits VAPA to the endosome. Interacts with STARD3NL (via FFAT motif). Interacts with CERT1. Interacts with PLEKHA3 and SACM1L to form a ternary complex. Interacts with VPS13A (via FFAT motif). Interacts with RB1CC1 (via phosphorylated FFAT motif), MIGA2 (via phosphorylated FFAT motif), RMDN3 (via phosphorylated FFAT motif), KCNB1 (via phosphorylated FFAT motif) and KCNB2 (via phosphorylated FFAT motif). Interacts (via MSP domain) with WDR44; the interactions connect the endoplasmic reticulum (ER) with the endosomal tubule. Ubiquitous.

It is found in the endoplasmic reticulum membrane. Its subcellular location is the cell membrane. It localises to the cell junction. The protein resides in the tight junction. The protein localises to the nucleus membrane. In terms of biological role, endoplasmic reticulum (ER)-anchored protein that mediates the formation of contact sites between the ER and endosomes via interaction with FFAT motif-containing proteins such as STARD3 or WDR44. STARD3-VAPA interaction enables cholesterol transfer from the ER to endosomes. Via interaction with WDR44 participates in neosynthesized protein export. In addition, recruited to the plasma membrane through OSBPL3 binding. The OSBPL3-VAPA complex stimulates RRAS signaling which in turn attenuates integrin beta-1 (ITGB1) activation at the cell surface. With OSBPL3, may regulate ER morphology. May play a role in vesicle trafficking. This chain is Vesicle-associated membrane protein-associated protein A, found in Rattus norvegicus (Rat).